Here is a 546-residue protein sequence, read N- to C-terminus: Peroxisomal OPC-8:0-CoA ligase 1 (546 aa).

6 residues coordinate ATP: S197, S198, G199, T200, T201, and K205. CoA is bound at residue K265. The interval 267–338 (EMHEMMSAIG…EKYPTVKILQ (72 aa)) is SBD1. Residues Q338, G339, T343, D424, and R439 each coordinate ATP. The tract at residues 339 to 403 (GYGLTESTGI…LKGPSIMKGY (65 aa)) is SBD2. Positions 447 and 448 each coordinate CoA. ATP is bound at residue K530. The Microbody targeting signal signature appears at 544-546 (SKL).

It belongs to the ATP-dependent AMP-binding enzyme family. It depends on Mg(2+) as a cofactor. As to expression, expressed at low levels in seedlings, cotyledons, leaves, hypocotyls and roots.

Its subcellular location is the peroxisome. It carries out the reaction (9S,13S,15Z)-12-oxophyto-10,15-dienoate + ATP + CoA = (10Z,15Z)-12-oxophytodienoyl-CoA + AMP + diphosphate. The catalysed reaction is (1S,2S)-OPC-8 + ATP + CoA = OPC8-CoA + AMP + diphosphate. It catalyses the reaction hexadecanoate + ATP + CoA = hexadecanoyl-CoA + AMP + diphosphate. The enzyme catalyses (9Z)-octadecenoate + ATP + CoA = (9Z)-octadecenoyl-CoA + AMP + diphosphate. It carries out the reaction tetradecanoate + ATP + CoA = tetradecanoyl-CoA + AMP + diphosphate. The catalysed reaction is decanoate + ATP + CoA = decanoyl-CoA + AMP + diphosphate. It catalyses the reaction dodecanoate + ATP + CoA = dodecanoyl-CoA + AMP + diphosphate. The enzyme catalyses octadecanoate + ATP + CoA = octadecanoyl-CoA + AMP + diphosphate. It carries out the reaction OPC-6 + ATP + CoA = OPC-6-CoA + AMP + diphosphate. The catalysed reaction is dinor-OPDA + ATP + CoA = dinor-OPDA-CoA + AMP + diphosphate. In terms of biological role, contributes to jasmonic acid biosynthesis by initiating the beta-oxidative chain shortening of its precursors. Converts 12-oxo-phytodienoic acid (OPDA) and 3-oxo-2-(2'-pentenyl)-cyclopentane-1-octanoic acid (OPC-8:0) into OPDA-CoA and OPC-8:0-CoA, respectively. Follows a two-step reaction mechanism, wherein the carboxylate substrate first undergoes adenylation by ATP, followed by a thioesterification in the presence of CoA to yield the final CoA thioester. The polypeptide is Peroxisomal OPC-8:0-CoA ligase 1 (Arabidopsis thaliana (Mouse-ear cress)).